Here is a 274-residue protein sequence, read N- to C-terminus: Diaminopimelate epimerase (274 aa).

Substrate contacts are provided by asparagine 11, glutamine 44, and asparagine 64. Cysteine 73 functions as the Proton donor in the catalytic mechanism. Residues 74–75, asparagine 157, asparagine 190, and 208–209 contribute to the substrate site; these read GN and ER. Cysteine 217 (proton acceptor) is an active-site residue. 218 to 219 provides a ligand contact to substrate; it reads GS.

The protein belongs to the diaminopimelate epimerase family. As to quaternary structure, homodimer.

Its subcellular location is the cytoplasm. The enzyme catalyses (2S,6S)-2,6-diaminopimelate = meso-2,6-diaminopimelate. The protein operates within amino-acid biosynthesis; L-lysine biosynthesis via DAP pathway; DL-2,6-diaminopimelate from LL-2,6-diaminopimelate: step 1/1. Functionally, catalyzes the stereoinversion of LL-2,6-diaminopimelate (L,L-DAP) to meso-diaminopimelate (meso-DAP), a precursor of L-lysine and an essential component of the bacterial peptidoglycan. The polypeptide is Diaminopimelate epimerase (Enterobacter sp. (strain 638)).